The following is a 766-amino-acid chain: Coenzyme PQQ synthesis protein F (766 aa).

H49 lines the Zn(2+) pocket. Residue E52 is the Proton acceptor of the active site. Zn(2+) is bound by residues H53 and E130.

It belongs to the peptidase M16 family. Requires Zn(2+) as cofactor.

It functions in the pathway cofactor biosynthesis; pyrroloquinoline quinone biosynthesis. Its function is as follows. Required for coenzyme pyrroloquinoline quinone (PQQ) biosynthesis. It is thought that this protein is a protease that cleaves peptides bond in a small peptide (gene pqqA), providing the glutamate and tyrosine residues which are necessary for the synthesis of PQQ. The protein is Coenzyme PQQ synthesis protein F (pqqF) of Pseudomonas putida (strain ATCC 47054 / DSM 6125 / CFBP 8728 / NCIMB 11950 / KT2440).